The sequence spans 173 residues: Cytochrome c-type biogenesis protein CcmE (173 aa).

The Cytoplasmic portion of the chain corresponds to methionine 1–arginine 8. The helical; Signal-anchor for type II membrane protein transmembrane segment at phenylalanine 9–alanine 29 threads the bilayer. Over leucine 30–lysine 173 the chain is Periplasmic. 2 residues coordinate heme: histidine 131 and tyrosine 135. A disordered region spans residues glycine 152–lysine 173. The span at alanine 156–lysine 173 shows a compositional bias: basic and acidic residues.

Belongs to the CcmE/CycJ family.

It is found in the cell inner membrane. Functionally, heme chaperone required for the biogenesis of c-type cytochromes. Transiently binds heme delivered by CcmC and transfers the heme to apo-cytochromes in a process facilitated by CcmF and CcmH. In Haemophilus influenzae (strain PittEE), this protein is Cytochrome c-type biogenesis protein CcmE.